The sequence spans 281 residues: Nuclear receptor-interacting protein 2 (281 aa).

The segment at 18–85 (ESCSTGQRQA…RAHLSQQRRL (68 aa)) is disordered. A compositionally biased stretch (pro residues) spans 36-47 (TPPPSSPWPTPP). A compositionally biased stretch (basic and acidic residues) spans 55–78 (QEARRDEGEARTRGQEAQLRDRAH). Positions 244 to 248 (LQTLL) match the LXXLL motif motif.

In terms of assembly, interacts with NR1F2, RARA and THRB in a ligand-dependent manner.

It is found in the nucleus. In terms of biological role, down-regulates transcriptional activation by nuclear receptors such as NR1F2. The protein is Nuclear receptor-interacting protein 2 (NRIP2) of Homo sapiens (Human).